The sequence spans 187 residues: Ribosome-recycling factor (187 aa).

The protein belongs to the RRF family.

The protein resides in the cytoplasm. Its function is as follows. Responsible for the release of ribosomes from messenger RNA at the termination of protein biosynthesis. May increase the efficiency of translation by recycling ribosomes from one round of translation to another. The sequence is that of Ribosome-recycling factor from Nitrosococcus oceani (strain ATCC 19707 / BCRC 17464 / JCM 30415 / NCIMB 11848 / C-107).